We begin with the raw amino-acid sequence, 348 residues long: Protein RecA (348 aa).

64 to 71 serves as a coordination point for ATP; sequence GPESSGKT. Residues 328-348 are disordered; the sequence is DTGGAAPAQEDEAQAQEELEF. Residues 336 to 348 show a composition bias toward acidic residues; the sequence is QEDEAQAQEELEF.

This sequence belongs to the RecA family.

Its subcellular location is the cytoplasm. Its function is as follows. Can catalyze the hydrolysis of ATP in the presence of single-stranded DNA, the ATP-dependent uptake of single-stranded DNA by duplex DNA, and the ATP-dependent hybridization of homologous single-stranded DNAs. It interacts with LexA causing its activation and leading to its autocatalytic cleavage. The sequence is that of Protein RecA from Bacillus licheniformis (strain ATCC 14580 / DSM 13 / JCM 2505 / CCUG 7422 / NBRC 12200 / NCIMB 9375 / NCTC 10341 / NRRL NRS-1264 / Gibson 46).